We begin with the raw amino-acid sequence, 132 residues long: Small ribosomal subunit protein uS8 (132 aa).

The protein belongs to the universal ribosomal protein uS8 family. In terms of assembly, part of the 30S ribosomal subunit. Contacts proteins S5 and S12.

In terms of biological role, one of the primary rRNA binding proteins, it binds directly to 16S rRNA central domain where it helps coordinate assembly of the platform of the 30S subunit. The polypeptide is Small ribosomal subunit protein uS8 (Borrelia garinii subsp. bavariensis (strain ATCC BAA-2496 / DSM 23469 / PBi) (Borreliella bavariensis)).